A 323-amino-acid chain; its full sequence is MADIDKLNIDSIIQRLLEVRGSKPGKNVQLQENEIRGLCLKSREIFLSQPILLELEAPLKICGDIHGQYYDLLRLFEYGGFPPESNYLFLGDYVDRGKQSLETICLLLAYKIKYPENFFLLRGNHECVSINRIYGFYDECKRRYNIKLWKTFTDCFNCLPIAAIVDEKIFCCHGGLSPDLQSMEQIRRIMRPTDVPDQGLLCDLLWSDPDKDVLGWGETDRGVSFTFGAEVVAKFLHKHDLDLICRAHQVVEDGYEFFAKRQLVTLFSAPNYCGEFDNAGAMMSVDETLMCSFQILKPAEKKKPNATRPVTPLRGMITKQAKK.

An N-acetylalanine modification is found at Ala2. Residues Asp64, His66, Asp92, and Asn124 each contribute to the Mn(2+) site. His125 functions as the Proton donor in the catalytic mechanism. 2 residues coordinate Mn(2+): His173 and His248. Residues Thr307 and Thr311 each carry the phosphothreonine modification.

This sequence belongs to the PPP phosphatase family. PP-1 subfamily. In terms of assembly, PP1 comprises a catalytic subunit, PPP1CA, PPP1CB or PPP1CC, which is folded into its native form by inhibitor 2 and glycogen synthetase kinase 3, and then complexed to one or several targeting or regulatory subunits. PPP1R12A, PPP1R12B and PPP1R12C mediate binding to myosin. PPP1R3A (in skeletal muscle), PPP1R3B (in liver), PPP1R3C, PPP1R3D and PPP1R3F (in brain) mediate binding to glycogen. PPP1R15A and PPP1R15B mediate binding to EIF2S1. Part of a complex containing PPP1R15B, PP1 and NCK1/2. Interacts with PPP1R3B, PPP1R7 and CDCA2. Interacts with IKFZ1; the interaction targets PPP1CC to pericentromeric heterochromatin, dephosphorylates IKAROS, stabilizes it and prevents it from degradation. Interacts with NOM1 and PPP1R8. Component of the PTW/PP1 phosphatase complex, composed of PPP1R10/PNUTS, TOX4, WDR82, and PPP1CA or PPP1CB or PPP1CC. Interacts with PPP1R8. Interacts with NEK2. Interacts with PPP1R42; the interaction is direct. Interacts with URI1; the interaction is phosphorylation-dependent and occurs in a growth factor-dependent manner. Interacts with FOXP3. Interacts with TMEM225 (via RVxF motif). Interacts with MKI67. Interacts with RRP1B; this targets PPP1CC to the nucleolus. Interacts with DYNLT4. Interacts (via RVxF motif) with FIRRM; regulates PLK1 kinase activity. Interacts with the KNL1 complex subunit KNL1; the interaction is direct and mutually exclusive with KNL1 binding to microtubules. Component of the SHOC2-MRAS-PP1c (SMP) complex consisting of SHOC2, GTP-bound M-Ras/MRAS and the catalytic subunit of protein phosphatase 1 (either PPP1CA, PPP1CB or PPP1CC). SHOC2 and PP1c preferably bind M-Ras/MRAS, but they also bind K-Ras/KRAS, N-Ras/NRAS and H-Ras/HRAS; these interactions are GTP-dependent and both SHOC2 and PP1c are required to form a stable complex. Interacts with SHOC2 in the absence of Ras GTPases. The cofactor is Mn(2+). Phosphorylated by NEK2.

The protein resides in the cytoplasm. Its subcellular location is the nucleus. It localises to the cleavage furrow. It is found in the nucleolus. The protein localises to the nucleoplasm. The protein resides in the chromosome. Its subcellular location is the centromere. It localises to the kinetochore. It is found in the nucleus speckle. The protein localises to the midbody. The protein resides in the mitochondrion. Its subcellular location is the cytoskeleton. It localises to the microtubule organizing center. It carries out the reaction O-phospho-L-seryl-[protein] + H2O = L-seryl-[protein] + phosphate. The enzyme catalyses O-phospho-L-threonyl-[protein] + H2O = L-threonyl-[protein] + phosphate. Its activity is regulated as follows. Inactivated by binding to URI1. Its function is as follows. Protein phosphatase that associates with over 200 regulatory proteins to form highly specific holoenzymes which dephosphorylate hundreds of biological targets. Protein phosphatase 1 (PP1) is essential for cell division, and participates in the regulation of glycogen metabolism, muscle contractility and protein synthesis. Dephosphorylates RPS6KB1. Involved in regulation of ionic conductances and long-term synaptic plasticity. May play an important role in dephosphorylating substrates such as the postsynaptic density-associated Ca(2+)/calmodulin dependent protein kinase II. Component of the PTW/PP1 phosphatase complex, which plays a role in the control of chromatin structure and cell cycle progression during the transition from mitosis into interphase. Regulates the recruitment of the SKA complex to kinetochores. Core component of the SHOC2-MRAS-PP1c (SMP) holophosphatase complex that regulates the MAPK pathway activation. Dephosphorylates MKI67 at the onset of anaphase. The SMP complex specifically dephosphorylates the inhibitory phosphorylation at 'Ser-259' of RAF1 kinase, 'Ser-365' of BRAF kinase and 'Ser-214' of ARAF kinase, stimulating their kinase activities. The SMP complex enhances the dephosphorylation activity and substrate specificity of PP1c. In Canis lupus familiaris (Dog), this protein is Serine/threonine-protein phosphatase PP1-gamma catalytic subunit (PPP1CC).